Consider the following 448-residue polypeptide: 5-hydroxytryptamine receptor 7 (448 aa).

Topologically, residues 1-86 (MMDVNSSGRP…INYGRVEKVV (86 aa)) are extracellular. 2 N-linked (GlcNAc...) asparagine glycosylation sites follow: asparagine 5 and asparagine 69. Residues 87 to 111 (IGSILTLITLLTIAGNCLVVISVCF) form a helical membrane-spanning segment. Residues 112 to 121 (VKKLRQPSNY) are Cytoplasmic-facing. The helical transmembrane segment at 122-143 (LIVSLALADLSVAVAVMPFVSV) threads the bilayer. Residues 144-155 (TDLIGGKWIFGH) lie on the Extracellular side of the membrane. A helical membrane pass occupies residues 156 to 181 (FFCNVFIAMDVMCCTASIMTLCVISI). A disulfide bridge connects residues cysteine 158 and cysteine 234. Aspartate 165 is a serotonin binding site. Residues 182–201 (DRYLGITRPLTYPVRQNGKC) lie on the Cytoplasmic side of the membrane. A helical transmembrane segment spans residues 202–222 (MAKMILSVWLLSASITLPPLF). Residues 223-240 (GWAQNVNDDKVCLISQDF) lie on the Extracellular side of the membrane. A helical membrane pass occupies residues 241-263 (GYTIYSTAVAFYIPMSVMLFMYY). Over 264 to 329 (QIYKAARKSA…SIFKREQKAA (66 aa)) the chain is Cytoplasmic. Residues 330-355 (TTLGIIVGAFTVCWLPFFLLSTARPF) form a helical membrane-spanning segment. Residues 356 to 366 (ICGTSCSCIPL) lie on the Extracellular side of the membrane. The chain crosses the membrane as a helical span at residues 367 to 390 (WVERTCLWLGYANSLINPFIYAFF). Residues 391-448 (NRDLRTTYRSLLQCQYRNINRKLSAAGMHEALKLAERPERSEFVLQNCDHCGKKGHDT) lie on the Cytoplasmic side of the membrane. Cysteine 404 is lipidated: S-palmitoyl cysteine.

This sequence belongs to the G-protein coupled receptor 1 family.

It localises to the cell membrane. Functionally, G-protein coupled receptor for 5-hydroxytryptamine (serotonin), a biogenic hormone that functions as a neurotransmitter, a hormone and a mitogen. Ligand binding causes a conformation change that triggers signaling via guanine nucleotide-binding proteins (G proteins) and modulates the activity of downstream effectors. HTR7 is coupled to G(s) G alpha proteins and mediates activation of adenylate cyclase activity. In Mus musculus (Mouse), this protein is 5-hydroxytryptamine receptor 7 (Htr7).